The primary structure comprises 794 residues: Zinc finger Y-chromosomal protein 1 (794 aa).

Residues 380 to 389 (TKQKLKKKRR) carry the Nuclear localization signal motif. 13 C2H2-type zinc fingers span residues 411–433 (YPCMICGKKFKSRGFLKRHMKNH), 442–464 (YRCTDCDYTTNKKVSLHNHLESH), 477–499 (LECEECGKIFLHANALFAHKLTH), 508–531 (HICKFCDYETAEQGLLNRHLLAVH), 537–559 (HICVECGKGFRHPSELKKHMRTH), 565–588 (YLCQYCDYRSADSSNLKTHVKTKH), 594–616 (FKCDICLQTFTDSKDLQEHAILH), 622–645 (HQCLHCDHKSSNSSDLKRHIISVH), 651–673 (HKCEVCEKGFHRPSELKKHEAAH), 679–702 (HQCRHCEFHIADPFVLSRHILSVH), 708–730 (YRCKRCKKGFRQQIELKKHMKTH), 736–759 (YQCEYCEYNTTDASGFKRHVISIH), and 765–788 (HRCDYCKKGFRRPSEKNQHTLKHH).

Belongs to the krueppel C2H2-type zinc-finger protein family. ZFX/ZFY subfamily.

The protein localises to the nucleus. Its function is as follows. Probable transcriptional activator. In Xenopus laevis (African clawed frog), this protein is Zinc finger Y-chromosomal protein 1 (zfy1).